The sequence spans 122 residues: Large ribosomal subunit protein uL14 (122 aa).

This sequence belongs to the universal ribosomal protein uL14 family. Part of the 50S ribosomal subunit. Forms a cluster with proteins L3 and L19. In the 70S ribosome, L14 and L19 interact and together make contacts with the 16S rRNA in bridges B5 and B8.

Binds to 23S rRNA. Forms part of two intersubunit bridges in the 70S ribosome. The polypeptide is Large ribosomal subunit protein uL14 (Elusimicrobium minutum (strain Pei191)).